Consider the following 173-residue polypeptide: Transcriptional repressor NrdR (173 aa).

Residues 3–34 (CPFCQHADTRVIDSRVSEDGATIRRRRECEAC) fold into a zinc finger. The 91-residue stretch at 49–139 (PAIVKSDGTR…VYRSFEDVAD (91 aa)) folds into the ATP-cone domain.

The protein belongs to the NrdR family. Requires Zn(2+) as cofactor.

In terms of biological role, negatively regulates transcription of bacterial ribonucleotide reductase nrd genes and operons by binding to NrdR-boxes. This is Transcriptional repressor NrdR from Stenotrophomonas maltophilia (strain R551-3).